We begin with the raw amino-acid sequence, 409 residues long: Toluene 1,2-dioxygenase system ferredoxin--NAD(+) reductase component (409 aa).

4-35 (HVAIIGNGVGGFTTAQALRAEGFEGRISLIGD) contacts FAD. Residue 145–173 (RLLIVGGGLIGCEVATTARKLGLSVTILE) participates in NAD(+) binding.

Belongs to the bacterial ring-hydroxylating dioxygenase ferredoxin reductase family. This dioxygenase system consists of four proteins: the two subunits of the hydroxylase component (todC1 and todC2), a ferredoxin (TodB) and a ferredoxin reductase (TodA). Requires FAD as cofactor.

The catalysed reaction is 2 reduced [2Fe-2S]-[ferredoxin] + NAD(+) + H(+) = 2 oxidized [2Fe-2S]-[ferredoxin] + NADH. It participates in xenobiotic degradation; toluene degradation. Part of the electron transfer component of toluene 1,2-dioxygenase, transfers electrons from ferredoxin (TodB) to NADH. The chain is Toluene 1,2-dioxygenase system ferredoxin--NAD(+) reductase component (todA) from Pseudomonas putida (Arthrobacter siderocapsulatus).